Reading from the N-terminus, the 336-residue chain is Holliday junction branch migration complex subunit RuvB (336 aa).

The tract at residues 4-184 (ADRLISAASN…FGIVQRLEFY (181 aa)) is large ATPase domain (RuvB-L). ATP-binding positions include isoleucine 23, arginine 24, glycine 65, lysine 68, threonine 69, threonine 70, 131–133 (EDY), arginine 174, tyrosine 184, and arginine 221. Position 69 (threonine 69) interacts with Mg(2+). Positions 185-255 (QVPDLQYIVG…VAAQALDMLN (71 aa)) are small ATPAse domain (RuvB-S). Residues 258-336 (AEGFDYMDRK…HFGITPPEMP (79 aa)) form a head domain (RuvB-H) region. DNA contacts are provided by arginine 294, arginine 313, and arginine 318.

This sequence belongs to the RuvB family. Homohexamer. Forms an RuvA(8)-RuvB(12)-Holliday junction (HJ) complex. HJ DNA is sandwiched between 2 RuvA tetramers; dsDNA enters through RuvA and exits via RuvB. An RuvB hexamer assembles on each DNA strand where it exits the tetramer. Each RuvB hexamer is contacted by two RuvA subunits (via domain III) on 2 adjacent RuvB subunits; this complex drives branch migration. In the full resolvosome a probable DNA-RuvA(4)-RuvB(12)-RuvC(2) complex forms which resolves the HJ.

It localises to the cytoplasm. The catalysed reaction is ATP + H2O = ADP + phosphate + H(+). In terms of biological role, the RuvA-RuvB-RuvC complex processes Holliday junction (HJ) DNA during genetic recombination and DNA repair, while the RuvA-RuvB complex plays an important role in the rescue of blocked DNA replication forks via replication fork reversal (RFR). RuvA specifically binds to HJ cruciform DNA, conferring on it an open structure. The RuvB hexamer acts as an ATP-dependent pump, pulling dsDNA into and through the RuvAB complex. RuvB forms 2 homohexamers on either side of HJ DNA bound by 1 or 2 RuvA tetramers; 4 subunits per hexamer contact DNA at a time. Coordinated motions by a converter formed by DNA-disengaged RuvB subunits stimulates ATP hydrolysis and nucleotide exchange. Immobilization of the converter enables RuvB to convert the ATP-contained energy into a lever motion, pulling 2 nucleotides of DNA out of the RuvA tetramer per ATP hydrolyzed, thus driving DNA branch migration. The RuvB motors rotate together with the DNA substrate, which together with the progressing nucleotide cycle form the mechanistic basis for DNA recombination by continuous HJ branch migration. Branch migration allows RuvC to scan DNA until it finds its consensus sequence, where it cleaves and resolves cruciform DNA. This Enterobacter sp. (strain 638) protein is Holliday junction branch migration complex subunit RuvB.